We begin with the raw amino-acid sequence, 308 residues long: Maspardin (308 aa).

One can recognise an AB hydrolase-1 domain in the interval 87–159; the sequence is FCDGFRKLLD…NSFWLMPAFM (73 aa). S304 carries the post-translational modification Phosphoserine.

The protein belongs to the AB hydrolase superfamily. Interacts with CD4. Interacts with ALDH16A1. Expressed in all tissues tested, including heart, brain, placenta, lung, liver, skeletal muscle, kidney and pancreas. Expressed in J.CaM1.6, HuT 78 and HeLa cell lines (at protein level).

It is found in the cytoplasm. The protein resides in the cytosol. The protein localises to the membrane. Its subcellular location is the endosome membrane. It localises to the golgi apparatus. It is found in the trans-Golgi network membrane. Its function is as follows. May play a role as a negative regulatory factor in CD4-dependent T-cell activation. This chain is Maspardin (SPG21), found in Homo sapiens (Human).